A 179-amino-acid polypeptide reads, in one-letter code: ATP synthase subunit b, chloroplastic (179 aa).

Residues 35 to 51 (IVILGGGIFKLGSTALS) traverse the membrane as a helical segment.

It belongs to the ATPase B chain family. In terms of assembly, F-type ATPases have 2 components, F(1) - the catalytic core - and F(0) - the membrane proton channel. F(1) has five subunits: alpha(3), beta(3), gamma(1), delta(1), epsilon(1). F(0) has four main subunits: a(1), b(1), b'(1) and c(10-14). The alpha and beta chains form an alternating ring which encloses part of the gamma chain. F(1) is attached to F(0) by a central stalk formed by the gamma and epsilon chains, while a peripheral stalk is formed by the delta, b and b' chains.

It localises to the plastid. It is found in the chloroplast thylakoid membrane. Its function is as follows. F(1)F(0) ATP synthase produces ATP from ADP in the presence of a proton or sodium gradient. F-type ATPases consist of two structural domains, F(1) containing the extramembraneous catalytic core and F(0) containing the membrane proton channel, linked together by a central stalk and a peripheral stalk. During catalysis, ATP synthesis in the catalytic domain of F(1) is coupled via a rotary mechanism of the central stalk subunits to proton translocation. Functionally, component of the F(0) channel, it forms part of the peripheral stalk, linking F(1) to F(0). This is ATP synthase subunit b, chloroplastic from Emiliania huxleyi (Coccolithophore).